The primary structure comprises 513 residues: ATP synthase subunit alpha (513 aa).

169–176 (GDRQTGKT) is a binding site for ATP.

Belongs to the ATPase alpha/beta chains family. In terms of assembly, F-type ATPases have 2 components, CF(1) - the catalytic core - and CF(0) - the membrane proton channel. CF(1) has five subunits: alpha(3), beta(3), gamma(1), delta(1), epsilon(1). CF(0) has three main subunits: a(1), b(2) and c(9-12). The alpha and beta chains form an alternating ring which encloses part of the gamma chain. CF(1) is attached to CF(0) by a central stalk formed by the gamma and epsilon chains, while a peripheral stalk is formed by the delta and b chains.

It is found in the cell inner membrane. The enzyme catalyses ATP + H2O + 4 H(+)(in) = ADP + phosphate + 5 H(+)(out). In terms of biological role, produces ATP from ADP in the presence of a proton gradient across the membrane. The alpha chain is a regulatory subunit. This chain is ATP synthase subunit alpha, found in Cupriavidus pinatubonensis (strain JMP 134 / LMG 1197) (Cupriavidus necator (strain JMP 134)).